We begin with the raw amino-acid sequence, 242 residues long: Caffeoyl-CoA O-methyltransferase 4 (242 aa).

Lys16 serves as a coordination point for substrate. Residues Thr58, Glu80, 82 to 83 (GV), Ser88, Asp106, and Ala135 contribute to the S-adenosyl-L-methionine site. Position 158 (Asp158) interacts with substrate. Asp158 provides a ligand contact to a divalent metal cation. S-adenosyl-L-methionine is bound at residue Asp160. A divalent metal cation-binding residues include Asp184 and Asn185. Residue Asn189 participates in substrate binding.

Belongs to the class I-like SAM-binding methyltransferase superfamily. Cation-dependent O-methyltransferase family. CCoAMT subfamily. Requires Mg(2+) as cofactor. As to expression, mostly expressed in the bottom and middle parts of the stems.

The enzyme catalyses (E)-caffeoyl-CoA + S-adenosyl-L-methionine = (E)-feruloyl-CoA + S-adenosyl-L-homocysteine + H(+). Its pathway is aromatic compound metabolism; phenylpropanoid biosynthesis. Functionally, methylates caffeoyl-CoA to feruloyl-CoA and 5-hydroxyferuloyl-CoA to sinapoyl-CoA. Plays a role in the synthesis of feruloylated polysaccharides. Involved in the reinforcement of the plant cell wall. Also involved in the responding to wounding or pathogen challenge by the increased formation of cell wall-bound ferulic acid polymers. The polypeptide is Caffeoyl-CoA O-methyltransferase 4 (CCOAOMT4) (Nicotiana tabacum (Common tobacco)).